Reading from the N-terminus, the 481-residue chain is Cobyric acid synthase (481 aa).

The GATase cobBQ-type domain occupies 247–433 (AFNVVVPLLP…LHGLFDVPDS (187 aa)). Catalysis depends on C328, which acts as the Nucleophile. The active site involves H425.

This sequence belongs to the CobB/CobQ family. CobQ subfamily.

It participates in cofactor biosynthesis; adenosylcobalamin biosynthesis. Functionally, catalyzes amidations at positions B, D, E, and G on adenosylcobyrinic A,C-diamide. NH(2) groups are provided by glutamine, and one molecule of ATP is hydrogenolyzed for each amidation. The protein is Cobyric acid synthase of Alcanivorax borkumensis (strain ATCC 700651 / DSM 11573 / NCIMB 13689 / SK2).